Here is a 435-residue protein sequence, read N- to C-terminus: Arginine/serine-rich coiled-coil protein 2 (435 aa).

Residues 1–27 (MAASDTERDGLAPEKTSPDRDKKKEQS) show a composition bias toward basic and acidic residues. A disordered region spans residues 1–230 (MAASDTERDG…PSPPPFRGRN (230 aa)). N-acetylalanine is present on alanine 2. Serine 4 carries the phosphoserine modification. Phosphothreonine occurs at positions 6 and 16. Phosphoserine occurs at positions 17, 30, and 32. Basic residues predominate over residues 35 to 51 (ASKHHYSRSRSRSRERK). The segment covering 66–111 (RSKEARRHESKDKSSKKHKSEEHNDKEHSSDKGRERLNSSENGEDR) has biased composition (basic and acidic residues). Serine 104 carries the post-translational modification Phosphoserine. A compositionally biased stretch (basic residues) spans 112-214 (HKRKERKSSR…KRIEKPRRFS (103 aa)). A coiled-coil region spans residues 230-270 (NTAMDAQEALARRLERAKKLQEQREKEMVEKQKQQEIAAAA). Lysine 376 participates in a covalent cross-link: Glycyl lysine isopeptide (Lys-Gly) (interchain with G-Cter in SUMO1); alternate. A Glycyl lysine isopeptide (Lys-Gly) (interchain with G-Cter in SUMO2); alternate cross-link involves residue lysine 376. The residue at position 377 (serine 377) is a Phosphoserine.

This sequence belongs to the RSRC2 family.

This chain is Arginine/serine-rich coiled-coil protein 2 (RSRC2), found in Pongo abelii (Sumatran orangutan).